A 1108-amino-acid polypeptide reads, in one-letter code: Unconventional myosin-Ie (1108 aa).

The Myosin motor domain maps to 19-692; it reads SGVDDMVLLS…SLFLLEEMRE (674 aa). 112 to 119 is a binding site for ATP; it reads GESGAGKT. Positions 581 to 591 are actin-binding; sequence PHYIRCIKPNE. Residues 695 to 724 enclose the IQ domain; the sequence is YDGYARVIQKSWRKFVARKKYVQMREEASD. One can recognise a TH1 domain in the interval 730–922; the sequence is KERRRNSINR…NKVLQVSIGP (193 aa). The disordered stretch occupies residues 919–966; that stretch reads SIGPGLPKNSRPTRRNTTQNTGYSSGTQNANYPVRAAPPPPGYHQNGV. The span at 933–949 shows a compositional bias: polar residues; the sequence is RNTTQNTGYSSGTQNAN. Phosphoserine occurs at positions 980 and 1002. The disordered stretch occupies residues 993 to 1053; that stretch reads ARPPLPRQQS…KPQPKPKPQV (61 aa). Polar residues predominate over residues 999-1013; the sequence is RQQSTSSDRVSQTPE. A compositionally biased stretch (pro residues) spans 1035–1052; that stretch reads RPPPAGGRPKPQPKPKPQ. The SH3 domain maps to 1051–1108; the sequence is PQVPQCKALYAYDAQDTDELSFNANDIIDIIKEDPSGWWTGRLRGKQGLFPNNYVTKI.

This sequence belongs to the TRAFAC class myosin-kinesin ATPase superfamily. Myosin family. As to quaternary structure, interacts with CALM and F-actin. Interacts (via SH3 domain) with SYNJ1, DNM1 and DNM2. Interacts with ARL14EP. Interacts with CARMIL1. In terms of tissue distribution, expressed in the immune system. In the kidney, predominantly expressed in the glomerulus, including podocytes.

Its subcellular location is the cytoplasm. It is found in the cytoskeleton. It localises to the cytoplasmic vesicle. The protein resides in the clathrin-coated vesicle. The protein localises to the cell junction. Functionally, actin-based motor molecule with ATPase activity. Unconventional myosins serve in intracellular movements. Their highly divergent tails bind to membranous compartments, which are then moved relative to actin filaments. Binds to membranes containing anionic phospholipids via its tail domain. Involved in clathrin-mediated endocytosis and intracellular movement of clathrin-coated vesicles. Required for normal morphology of the glomerular basement membrane, normal development of foot processes by kidney podocytes and normal kidney function. In dendritic cells, may control the movement of class II-containing cytoplasmic vesicles along the actin cytoskeleton by connecting them with the actin network via ARL14EP and ARL14. The protein is Unconventional myosin-Ie (MYO1E) of Homo sapiens (Human).